Consider the following 358-residue polypeptide: 5,10-methenyltetrahydromethanopterin hydrogenase (358 aa).

The protein belongs to the HMD family. As to quaternary structure, homotetramer.

It carries out the reaction 5,10-methenyl-5,6,7,8-tetrahydromethanopterin + H2 = 5,10-methylenetetrahydromethanopterin + H(+). It functions in the pathway one-carbon metabolism; methanogenesis from CO(2); 5,10-methylene-5,6,7,8-tetrahydromethanopterin from 5,10-methenyl-5,6,7,8-tetrahydromethanopterin (hydrogen route): step 1/1. Its activity is regulated as follows. Activity requires salt; 100 mM potassium phosphate, potassium chloride, and sodium chloride are equally effective. In terms of biological role, catalyzes the reversible reduction of methenyl-H(4)MPT(+) to methylene-H(4)MPT. This is 5,10-methenyltetrahydromethanopterin hydrogenase from Methanopyrus kandleri (strain AV19 / DSM 6324 / JCM 9639 / NBRC 100938).